Here is an 852-residue protein sequence, read N- to C-terminus: Bifunctional uridylyltransferase/uridylyl-removing enzyme (852 aa).

The tract at residues 1-318 (MPANLSSALE…SAPMRVTLRI (318 aa)) is uridylyltransferase. Residues 319 to 672 (DDDYIQVNNQ…SRILFKSDSF (354 aa)) form a uridylyl-removing region. One can recognise an HD domain in the interval 436 to 558 (VDDHILTVVR…VQTHERLSAL (123 aa)). ACT domains are found at residues 673–757 (QVMV…SHSR) and 785–852 (SVEI…EQLS).

It belongs to the GlnD family. The cofactor is Mg(2+).

The catalysed reaction is [protein-PII]-L-tyrosine + UTP = [protein-PII]-uridylyl-L-tyrosine + diphosphate. The enzyme catalyses [protein-PII]-uridylyl-L-tyrosine + H2O = [protein-PII]-L-tyrosine + UMP + H(+). Uridylyltransferase (UTase) activity is inhibited by glutamine, while glutamine activates uridylyl-removing (UR) activity. Modifies, by uridylylation and deuridylylation, the PII regulatory proteins (GlnB and homologs), in response to the nitrogen status of the cell that GlnD senses through the glutamine level. Under low glutamine levels, catalyzes the conversion of the PII proteins and UTP to PII-UMP and PPi, while under higher glutamine levels, GlnD hydrolyzes PII-UMP to PII and UMP (deuridylylation). Thus, controls uridylylation state and activity of the PII proteins, and plays an important role in the regulation of nitrogen assimilation and metabolism. This Neisseria meningitidis serogroup A / serotype 4A (strain DSM 15465 / Z2491) protein is Bifunctional uridylyltransferase/uridylyl-removing enzyme.